The primary structure comprises 217 residues: Ribosomal large subunit pseudouridine synthase E (217 aa).

D79 acts as the Nucleophile in catalysis.

This sequence belongs to the pseudouridine synthase RsuA family.

The catalysed reaction is uridine(2457) in 23S rRNA = pseudouridine(2457) in 23S rRNA. In terms of biological role, responsible for synthesis of pseudouridine from uracil-2457 in 23S ribosomal RNA. The chain is Ribosomal large subunit pseudouridine synthase E (rluE) from Escherichia coli O6:H1 (strain CFT073 / ATCC 700928 / UPEC).